The sequence spans 632 residues: tRNA uridine 5-carboxymethylaminomethyl modification enzyme MnmG (632 aa).

Residues 15–20 (GAGHAG), isoleucine 127, and serine 182 each bind FAD. 276–290 (GPRYCPSIEDKIVRF) serves as a coordination point for NAD(+). Residue glutamine 373 coordinates FAD.

Belongs to the MnmG family. Homodimer. Heterotetramer of two MnmE and two MnmG subunits. Requires FAD as cofactor.

The protein resides in the cytoplasm. Its function is as follows. NAD-binding protein involved in the addition of a carboxymethylaminomethyl (cmnm) group at the wobble position (U34) of certain tRNAs, forming tRNA-cmnm(5)s(2)U34. The sequence is that of tRNA uridine 5-carboxymethylaminomethyl modification enzyme MnmG from Streptococcus pyogenes serotype M2 (strain MGAS10270).